Reading from the N-terminus, the 860-residue chain is Leucine--tRNA ligase (860 aa).

Residues 42–52 (PYPSGRLHMGH) carry the 'HIGH' region motif. A 'KMSKS' region motif is present at residues 619–623 (KMSKS). An ATP-binding site is contributed by Lys-622.

This sequence belongs to the class-I aminoacyl-tRNA synthetase family.

The protein resides in the cytoplasm. It catalyses the reaction tRNA(Leu) + L-leucine + ATP = L-leucyl-tRNA(Leu) + AMP + diphosphate. The protein is Leucine--tRNA ligase of Sodalis glossinidius (strain morsitans).